The following is a 407-amino-acid chain: Tryptophan 2,3-dioxygenase B (407 aa).

Substrate contacts are provided by residues 71 to 75 and arginine 143; that span reads FIVTH. A heme-binding site is contributed by histidine 327. Threonine 341 serves as a coordination point for substrate.

It belongs to the tryptophan 2,3-dioxygenase family. As to quaternary structure, homotetramer. Dimer of dimers. The cofactor is heme.

The enzyme catalyses L-tryptophan + O2 = N-formyl-L-kynurenine. The protein operates within amino-acid degradation; L-tryptophan degradation via kynurenine pathway; L-kynurenine from L-tryptophan: step 1/2. In terms of biological role, heme-dependent dioxygenase that catalyzes the oxidative cleavage of the L-tryptophan (L-Trp) pyrrole ring and converts L-tryptophan to N-formyl-L-kynurenine. Catalyzes the oxidative cleavage of the indole moiety. In Danio rerio (Zebrafish), this protein is Tryptophan 2,3-dioxygenase B.